Reading from the N-terminus, the 207-residue chain is Urease accessory protein UreG (207 aa).

14–21 (GPVGSGKT) is a GTP binding site.

Belongs to the SIMIBI class G3E GTPase family. UreG subfamily. Homodimer. UreD, UreF and UreG form a complex that acts as a GTP-hydrolysis-dependent molecular chaperone, activating the urease apoprotein by helping to assemble the nickel containing metallocenter of UreC. The UreE protein probably delivers the nickel.

Its subcellular location is the cytoplasm. Its function is as follows. Facilitates the functional incorporation of the urease nickel metallocenter. This process requires GTP hydrolysis, probably effectuated by UreG. The polypeptide is Urease accessory protein UreG (Pseudomonas entomophila (strain L48)).